Reading from the N-terminus, the 123-residue chain is Large ribosomal subunit protein bL17 (123 aa).

Belongs to the bacterial ribosomal protein bL17 family. As to quaternary structure, part of the 50S ribosomal subunit. Contacts protein L32.

This Borreliella burgdorferi (strain ZS7) (Borrelia burgdorferi) protein is Large ribosomal subunit protein bL17.